A 375-amino-acid chain; its full sequence is Succinyl-diaminopimelate desuccinylase (375 aa).

Histidine 66 is a binding site for Zn(2+). The active site involves aspartate 68. Zn(2+) is bound at residue aspartate 99. The active-site Proton acceptor is the glutamate 133. Zn(2+) is bound by residues glutamate 134, glutamate 162, and histidine 348.

Belongs to the peptidase M20A family. DapE subfamily. Homodimer. Requires Zn(2+) as cofactor. Co(2+) is required as a cofactor.

It catalyses the reaction N-succinyl-(2S,6S)-2,6-diaminopimelate + H2O = (2S,6S)-2,6-diaminopimelate + succinate. It functions in the pathway amino-acid biosynthesis; L-lysine biosynthesis via DAP pathway; LL-2,6-diaminopimelate from (S)-tetrahydrodipicolinate (succinylase route): step 3/3. Catalyzes the hydrolysis of N-succinyl-L,L-diaminopimelic acid (SDAP), forming succinate and LL-2,6-diaminopimelate (DAP), an intermediate involved in the bacterial biosynthesis of lysine and meso-diaminopimelic acid, an essential component of bacterial cell walls. This chain is Succinyl-diaminopimelate desuccinylase, found in Buchnera aphidicola subsp. Acyrthosiphon pisum (strain 5A).